Consider the following 430-residue polypeptide: Serine--tRNA ligase (430 aa).

235 to 237 is a binding site for L-serine; that stretch reads TAE. ATP is bound by residues 266 to 268 and Val-282; that span reads RRE. Glu-289 is an L-serine binding site. 353-356 serves as a coordination point for ATP; it reads EASS. Residue Ser-389 participates in L-serine binding.

It belongs to the class-II aminoacyl-tRNA synthetase family. Type-1 seryl-tRNA synthetase subfamily. In terms of assembly, homodimer. The tRNA molecule binds across the dimer.

It is found in the cytoplasm. It catalyses the reaction tRNA(Ser) + L-serine + ATP = L-seryl-tRNA(Ser) + AMP + diphosphate + H(+). It carries out the reaction tRNA(Sec) + L-serine + ATP = L-seryl-tRNA(Sec) + AMP + diphosphate + H(+). Its pathway is aminoacyl-tRNA biosynthesis; selenocysteinyl-tRNA(Sec) biosynthesis; L-seryl-tRNA(Sec) from L-serine and tRNA(Sec): step 1/1. Its function is as follows. Catalyzes the attachment of serine to tRNA(Ser). Is also able to aminoacylate tRNA(Sec) with serine, to form the misacylated tRNA L-seryl-tRNA(Sec), which will be further converted into selenocysteinyl-tRNA(Sec). This Chlorobium luteolum (strain DSM 273 / BCRC 81028 / 2530) (Pelodictyon luteolum) protein is Serine--tRNA ligase.